Here is a 1706-residue protein sequence, read N- to C-terminus: MQQSHQAGYANAADRESGIPAAVLDGIKAVAKEKNATLMFRLVNPHSTSLIAEGVATKGLGVHAKSSDWGLQAGYIPVNPNLSKLFGRAPEVIARADNDVNSSLAHGHTAVDLTLSKERLDYLRQAGLVTGMADGVVASNHAGYEQFEFRVKETSDGRYAVQYRRKGGDDFEAVKVIGNAAGIPLTADIDMFAIMPHLSNFRDSARSSVTSGDSVTDYLARTRRAASEATGGLDRERIDLLWKIARAGARSAVGTEARRQFRYDGDMNIGVITDFELEVRNALNRRAHAVGAQDVVQHGTEQNNPFPEADEKIFVVSATGESQMLTRGQLKEYIGQQRGEGYVFYENRAYGVAGKSLFDDGLGAAPGVPGGRSKSSPDVLETVPASPGLRRPSLGAVERQDSGYDSLDGVGSRSFSLGEVSDMAAVEAAELEMTRQVLHAGARQDDAEPGVSGASAHWGQRALQGAQAVAAAQRLVHAIALMTQFGRAGSTNTPQEAASLSAAVFGLGEASSAVAETVSGFFRGSSRWAGGFGVAGGAMALGGGIAAAVGAGMSLTDDAPAGQKAAAGAEIALQLTGGTVELASSIALALAAARGVTSGLQVAGASAGAAAGALAAALSPMEIYGLVQQSHYADQLDKLAQESSAYGYEGDALLAQLYRDKTAAEGAVAGVSAVLSTVGAAVSIAAAASVVGAPVAVVTSLLTGALNGILRGVQQPIIEKLANDYARKIDELGGPQAYFEKNLQARHEQLANSDGLRKMLADLQAGWNASSVIGVQTTEISKSALELAAITGNADNLKSADVFVDRFIQGERVAGQPVVLDVAAGGIDIASRKGERPALTFITPLAAPGEEQRRRTKTGKSEFTTFVEIVGKQDRWRIRDGAADTTIDLAKVVSQLVDANGVLKHSIKLEVIGGDGDDVVLANASRIHYDGGAGTNTVSYAALGRQDSITVSADGERFNVRKQLNNANVYREGVATQKTAYGKRTENVQYRHVELARVGQLVEVDTLEHVQHIIGGAGNDSITGNAHDNFLAGGAGDDRLDGGAGNDTLVGGEGHNTVVGGAGDDVFLQDLGVWSNQLDGGAGVDTVKYNVHQPSEERLERMGDTGIHADLQKGTVEKWPALNLFSVDHVKNIENLHGSSLNDSIAGDDRDNELWGDDGNDTIHGRGGDDILRGGLGLDTLYGEDGNDIFLQDDETVSDDIDGGAGLDTVDYSAMIHAGKIVAPHEYGFGIEADLSEGWVRKAARRGMDYYDSVRSVENVIGTSMKDVLIGDAQANTLMGQGGDDTVRGGDGDDLLFGGDGNDMLYGDAGNDTLYGGLGDDTLEGGAGNDWFGQTPAREHDVLRGGAGVDTVDYSQAGAHAGVATGRIGLGILADLGAGRVDKLGEAGSSAYDTVSGIENVVGTELADRITGDAQANVLRGAGGADVLAGGEGDDVLLGGDGDDQLSGDAGRDRLYGEAGDDWFFQDAANAGNLLDGGDGNDTVDFSGPGRGLDAGAKGVFLSLGKGFASLMDEPETSNVLRHIENAVGSVRDDVLIGDAGANVLNGLAGNDVLSGGAGDDVLLGDEGSDLLSGDAGNDDLFGGQGDDTYLFGAGYGHDTIYESGGGHDTIRINAGADQLWFARQGNDLEIRILGTDDALTVHDWYRDADHRVEAIHAANQAIDPAGIEKLVEAMAQYPDPGAAAAAPPAARVPDTLMQSLAVNWR.

The tract at residues Met-1 to Arg-399 is a, catalytic. Ala-349–Ser-356 serves as a coordination point for ATP. A disordered region spans residues Gly-367 to Asp-405. Residues Gln-400–Ile-912 are b, Ala/Gly-rich. The required for interaction with CyaC stretch occupies residues Leu-500 to Val-698. 2 N6-palmitoyl lysine lipidation sites follow: Lys-860 and Lys-983. Residues Gly-913 to Ile-1656 form a c region. Hemolysin-type calcium-binding repeat units follow at residues Ile-1014 to Leu-1031, Ala-1032 to Leu-1049, Val-1050 to Phe-1067, Trp-1155 to Leu-1172, Arg-1173 to Phe-1190, Met-1279 to Leu-1296, Phe-1297 to Leu-1314, Tyr-1315 to Phe-1332, Thr-1335 to Val-1352, Thr-1411 to Leu-1428, Ala-1429 to Leu-1446, Ser-1447 to Phe-1464, Ala-1468 to Val-1484, Ile-1537 to Leu-1554, Ser-1555 to Leu-1572, Ser-1573 to Tyr-1590, and Glu-1603 to Leu-1620. The tract at residues His-1657 to Arg-1706 is d, Asp/Gly-rich.

It in the N-terminal section; belongs to the adenylyl cyclase class-2 family. This sequence in the C-terminal section; belongs to the RTX prokaryotic toxin family. Released in a processed form. In terms of processing, palmitoylated at Lys-860 and Lys-983 by CyaC. The toxin only becomes active when modified in position Lys-983: palmitoylation is required for efficient membrane insertion and pore formation of the acylated Hemolysin chain.

Its subcellular location is the secreted. It is found in the host cell membrane. It carries out the reaction ATP = 3',5'-cyclic AMP + diphosphate. With respect to regulation, activated by host calmodulin. Bifunctional adenylate cyclase toxin-hemolysin that plays a crucial role in host colonization. It causes whooping cough by acting on mammalian cells by elevating cAMP-concentration and thus disrupts normal cell function. Functionally, adenylate cyclase that is activated by host intracellular calmodulin and catalyzes un-regulated conversion of ATP to cAMP, thereby impairing microbicidal functions of immune effector cells and inducing apoptosis of lung macrophages. Its function is as follows. Hemolysin that forms small cation-selective membrane channels, leading to hemolytic activity. The hemolytic activity of CyaA is weak compared with that of the HlyA of E.coli. The protein is Bifunctional hemolysin/adenylate cyclase (cya) of Bordetella bronchiseptica (strain ATCC BAA-588 / NCTC 13252 / RB50) (Alcaligenes bronchisepticus).